We begin with the raw amino-acid sequence, 311 residues long: Cadmium, cobalt and zinc/H(+)-K(+) antiporter (311 aa).

At 1–12 (MGHNHNEGANKK) the chain is on the extracellular side. A helical transmembrane segment spans residues 13 to 33 (VLLISFIMITGYMIIEAIGGF). The Cytoplasmic portion of the chain corresponds to 34-43 (LTNSLALLSD). The chain crosses the membrane as a helical span at residues 44–64 (AGHMLSDSISLMVALIAFTLA). At 65 to 78 (EKKANHNKTFGYKR) the chain is on the extracellular side. A helical membrane pass occupies residues 79 to 99 (FEILAAVINGAALILISLYII). Topologically, residues 100 to 115 (YEAIERFSNPPKVATT) are cytoplasmic. A helical transmembrane segment spans residues 116–136 (GMLTISIIGLVVNLLVAWIMM). At 137–157 (SGGDTKNNLNIRGAYLHVISD) the chain is on the extracellular side. Residues 158–178 (MLGSVGAILAAILIIFFGWGW) form a helical membrane-spanning segment. At 179 to 311 (ADPLASIIVA…MEKQRDHHHH (133 aa)) the chain is on the cytoplasmic side.

The protein belongs to the cation diffusion facilitator (CDF) transporter (TC 2.A.4) family. SLC30A subfamily.

The protein resides in the cell membrane. Functionally, involved in divalent cation and potassium homeostasis in the cell. Catalyzes the active efflux of zinc, cadmium and cobalt, in exchange for potassium and H(+) ions. The sequence is that of Cadmium, cobalt and zinc/H(+)-K(+) antiporter (czcD) from Bacillus subtilis (strain 168).